Here is a 105-residue protein sequence, read N- to C-terminus: Pyrimidine/purine nucleoside phosphorylase (105 aa).

Belongs to the nucleoside phosphorylase PpnP family.

The enzyme catalyses a purine D-ribonucleoside + phosphate = a purine nucleobase + alpha-D-ribose 1-phosphate. It carries out the reaction adenosine + phosphate = alpha-D-ribose 1-phosphate + adenine. The catalysed reaction is cytidine + phosphate = cytosine + alpha-D-ribose 1-phosphate. It catalyses the reaction guanosine + phosphate = alpha-D-ribose 1-phosphate + guanine. The enzyme catalyses inosine + phosphate = alpha-D-ribose 1-phosphate + hypoxanthine. It carries out the reaction thymidine + phosphate = 2-deoxy-alpha-D-ribose 1-phosphate + thymine. The catalysed reaction is uridine + phosphate = alpha-D-ribose 1-phosphate + uracil. It catalyses the reaction xanthosine + phosphate = alpha-D-ribose 1-phosphate + xanthine. Catalyzes the phosphorolysis of diverse nucleosides, yielding D-ribose 1-phosphate and the respective free bases. Can use uridine, adenosine, guanosine, cytidine, thymidine, inosine and xanthosine as substrates. Also catalyzes the reverse reactions. This is Pyrimidine/purine nucleoside phosphorylase from Ralstonia pickettii (strain 12J).